The following is a 216-amino-acid chain: uncharacterized protein (216 aa).

The Integrase catalytic domain occupies 54-215; sequence TATQPNEKWT…SPVNYRTQSL (162 aa).

It belongs to the transposase IS3/IS150/IS904 family.

This is an uncharacterized protein from Haemophilus influenzae (strain ATCC 51907 / DSM 11121 / KW20 / Rd).